The sequence spans 171 residues: Flavodoxin (171 aa).

One can recognise a Flavodoxin-like domain in the interval 4-165 (IGIFFGSDTG…RIKQWVKQII (162 aa)).

Belongs to the flavodoxin family. It depends on FMN as a cofactor.

Low-potential electron donor to a number of redox enzymes. The polypeptide is Flavodoxin (fldA) (Buchnera aphidicola subsp. Acyrthosiphon pisum (strain APS) (Acyrthosiphon pisum symbiotic bacterium)).